The sequence spans 215 residues: Guanylate kinase (215 aa).

One can recognise a Guanylate kinase-like domain in the interval 11–189 (GNVFMVVAPS…ALTELVQIIS (179 aa)). 18–25 (APSGAGKS) serves as a coordination point for ATP.

This sequence belongs to the guanylate kinase family.

The protein localises to the cytoplasm. It carries out the reaction GMP + ATP = GDP + ADP. In terms of biological role, essential for recycling GMP and indirectly, cGMP. The protein is Guanylate kinase of Bordetella bronchiseptica (strain ATCC BAA-588 / NCTC 13252 / RB50) (Alcaligenes bronchisepticus).